Reading from the N-terminus, the 652-residue chain is Acetyl-coenzyme A synthetase (652 aa).

CoA is bound by residues 191–194, Thr311, and Asn335; that span reads RAGR. ATP-binding positions include 387-389, 411-416, Asp500, and Arg515; these read GEP and DTWWQT. Ser523 serves as a coordination point for CoA. Residue Arg526 coordinates ATP. The Mg(2+) site is built by Val537, His539, and Ile542. Arg584 lines the CoA pocket. Lys609 bears the N6-acetyllysine; by Pat mark.

This sequence belongs to the ATP-dependent AMP-binding enzyme family. Monomer. Mg(2+) is required as a cofactor. In terms of processing, acetylated. Deacetylation by the SIR2-homolog deacetylase activates the enzyme.

The catalysed reaction is acetate + ATP + CoA = acetyl-CoA + AMP + diphosphate. Functionally, catalyzes the conversion of acetate into acetyl-CoA (AcCoA), an essential intermediate at the junction of anabolic and catabolic pathways. Acs undergoes a two-step reaction. In the first half reaction, Acs combines acetate with ATP to form acetyl-adenylate (AcAMP) intermediate. In the second half reaction, it can then transfer the acetyl group from AcAMP to the sulfhydryl group of CoA, forming the product AcCoA. Required for acetate recapture but not for acetate excretion when this organism is grown on ethanolamine. In terms of biological role, enables the cell to use acetate during aerobic growth to generate energy via the TCA cycle, and biosynthetic compounds via the glyoxylate shunt. Acetylates CheY, the response regulator involved in flagellar movement and chemotaxis. The chain is Acetyl-coenzyme A synthetase from Salmonella typhimurium (strain LT2 / SGSC1412 / ATCC 700720).